The primary structure comprises 402 residues: NAD-dependent protein deacetylase sirtuin-7 (402 aa).

2 disordered regions span residues 1–25 (MAAGGGLSRSERKAAERVRRLREEQ) and 59–78 (VTELQGRSRRREGLKRRQEE). A compositionally biased stretch (basic and acidic residues) spans 9–25 (RSERKAAERVRRLREEQ). The region spanning 83–330 (PEELRRKVRE…RLLMDELGLE (248 aa)) is the Deacetylase sirtuin-type domain. Residues 108-127 (GAGISTAASIPDYRGPNGVW) and 168-171 (QNCD) contribute to the NAD(+) site. Histidine 188 acts as the Proton acceptor in catalysis. Positions 196, 199, 226, and 229 each coordinate Zn(2+). Residues 269-271 (GSS), 298-300 (NLQ), and cysteine 316 contribute to the NAD(+) site. Residues 355–385 (SHSRKSLCRSREEPPPGDQSAPLASATPILG) form a disordered region. Position 390 is an asymmetric dimethylarginine; alternate (arginine 390). At arginine 390 the chain carries Omega-N-methylarginine; alternate.

The protein belongs to the sirtuin family. Class IV subfamily. In terms of assembly, interacts with UBTF and the RNA polymerase I complex. Interacts with components of the B-WICH complex, such as MYBBP1A, SMARCA5/SNF2H and BAZ1B/WSTF. Interacts with ELK4, leading to stabilization at target promoters for H3K18Ac deacetylation. Interacts with histone H2A and/or histone H2B. Interacts with DNMT1. Interacts with SIRT1. Zn(2+) is required as a cofactor. Phosphorylated during mitosis. Post-translationally, methylation at Arg-390 by PRMT6 inhibits the H3K18Ac histone deacetylase activity, promoting mitochondria biogenesis and maintaining mitochondria respiration. In terms of processing, ubiquitinated via 'Lys-63'-linked ubiquitin chains. Deubiquitinated by USP7, inhibiting the H3K18Ac histone deacetylase activity and regulating gluconeogenesis. Ubiquitinated by E3 ubiquitin-protein ligase complex containing FBXO7; leading to proteasomal degradation.

It localises to the nucleus. The protein resides in the nucleolus. It is found in the nucleoplasm. Its subcellular location is the chromosome. The protein localises to the cytoplasm. It carries out the reaction N(6)-acetyl-L-lysyl-[protein] + NAD(+) + H2O = 2''-O-acetyl-ADP-D-ribose + nicotinamide + L-lysyl-[protein]. The enzyme catalyses N(6)-glutaryl-L-lysyl-[protein] + NAD(+) + H2O = 2''-O-glutaryl-ADP-D-ribose + nicotinamide + L-lysyl-[protein]. The catalysed reaction is N(6)-succinyl-L-lysyl-[protein] + NAD(+) + H2O = 2''-O-succinyl-ADP-D-ribose + nicotinamide + L-lysyl-[protein]. It catalyses the reaction N(6)-propanoyl-L-lysyl-[protein] + NAD(+) + H2O = 3''-O-propanoyl-ADP-D-ribose + nicotinamide + L-lysyl-[protein]. It carries out the reaction N(6)-decanoyl-L-lysyl-[protein] + NAD(+) + H2O = 2''-O-decanoyl-ADP-D-ribose + nicotinamide + L-lysyl-[protein]. NAD-dependent protein-lysine deacetylase and deacylase activities are activated by nucleic acids. Histone deacetylase activity is activated by DNA. Protein-lysine deacylase activity is activated by RNA. H3K18Ac histone deacetylase activity is inhibited by methylation at Arg-390. H3K18Ac histone deacetylase activity is inhibited by deubiquitination by USP7. In terms of biological role, NAD-dependent protein-lysine deacylase that can act both as a deacetylase or deacylase (desuccinylase, depropionylase, deglutarylase and dedecanoylase), depending on the context. Specifically mediates deacetylation of histone H3 at 'Lys-18' (H3K18Ac). In contrast to other histone deacetylases, displays strong preference for a specific histone mark, H3K18Ac, directly linked to control of gene expression. H3K18Ac is mainly present around the transcription start site of genes and has been linked to activation of nuclear hormone receptors; SIRT7 thereby acts as a transcription repressor. Moreover, H3K18 hypoacetylation has been reported as a marker of malignancy in various cancers and seems to maintain the transformed phenotype of cancer cells. Also able to mediate deacetylation of histone H3 at 'Lys-36' (H3K36Ac) in the context of nucleosomes. Also mediates deacetylation of non-histone proteins, such as ATM, CDK9, DDX21, DDB1, FBL, FKBP5/FKBP51, GABPB1, RAN, RRP9/U3-55K and POLR1E/PAF53. Enriched in nucleolus where it stimulates transcription activity of the RNA polymerase I complex. Acts by mediating the deacetylation of the RNA polymerase I subunit POLR1E/PAF53, thereby promoting the association of RNA polymerase I with the rDNA promoter region and coding region. In response to metabolic stress, SIRT7 is released from nucleoli leading to hyperacetylation of POLR1E/PAF53 and decreased RNA polymerase I transcription. Required to restore the transcription of ribosomal RNA (rRNA) at the exit from mitosis. Promotes pre-ribosomal RNA (pre-rRNA) cleavage at the 5'-terminal processing site by mediating deacetylation of RRP9/U3-55K, a core subunit of the U3 snoRNP complex. Mediates 'Lys-37' deacetylation of Ran, thereby regulating the nuclear export of NF-kappa-B subunit RELA/p65. Acts as a regulator of DNA damage repair by mediating deacetylation of ATM during the late stages of DNA damage response, promoting ATM dephosphorylation and deactivation. Suppresses the activity of the DCX (DDB1-CUL4-X-box) E3 ubiquitin-protein ligase complexes by mediating deacetylation of DDB1, which prevents the interaction between DDB1 and CUL4 (CUL4A or CUL4B). Activates RNA polymerase II transcription by mediating deacetylation of CDK9, thereby promoting 'Ser-2' phosphorylation of the C-terminal domain (CTD) of RNA polymerase II. Deacetylates FBL, promoting histone-glutamine methyltransferase activity of FBL. Acts as a regulator of mitochondrial function by catalyzing deacetylation of GABPB1. Regulates Akt/AKT1 activity by mediating deacetylation of FKBP5/FKBP51. Required to prevent R-loop-associated DNA damage and transcription-associated genomic instability by mediating deacetylation and subsequent activation of DDX21, thereby overcoming R-loop-mediated stalling of RNA polymerases. In addition to protein deacetylase activity, also acts as a protein-lysine deacylase. Acts as a protein depropionylase by mediating depropionylation of Osterix (SP7), thereby regulating bone formation by osteoblasts. Acts as a histone deglutarylase by mediating deglutarylation of histone H4 on 'Lys-91' (H4K91glu); a mark that destabilizes nucleosomes by promoting dissociation of the H2A-H2B dimers from nucleosomes. Acts as a histone desuccinylase: in response to DNA damage, recruited to DNA double-strand breaks (DSBs) and catalyzes desuccinylation of histone H3 on 'Lys-122' (H3K122succ), thereby promoting chromatin condensation and DSB repair. Also promotes DSB repair by promoting H3K18Ac deacetylation, regulating non-homologous end joining (NHEJ). Along with its role in DNA repair, required for chromosome synapsis during prophase I of female meiosis by catalyzing H3K18Ac deacetylation. Involved in transcriptional repression of LINE-1 retrotransposon via H3K18Ac deacetylation, and promotes their association with the nuclear lamina. Required to stabilize ribosomal DNA (rDNA) heterochromatin and prevent cellular senescence induced by rDNA instability. Acts as a negative regulator of SIRT1 by preventing autodeacetylation of SIRT1, restricting SIRT1 deacetylase activity. The chain is NAD-dependent protein deacetylase sirtuin-7 from Rattus norvegicus (Rat).